Here is a 371-residue protein sequence, read N- to C-terminus: Archaeal glycosylation protein Q (371 aa).

The disordered stretch occupies residues 19–39; it reads QRSDGSMPAGHNGPYHDPETP.

It is found in the cytoplasm. It participates in cell surface structure biogenesis; S-layer biogenesis. Functionally, putative isomerase involved in the N-glycosylation pathway. Required for the appearance of the methyl ester of hexuronic acid found at position four of the pentasaccharide N-linked to the S-layer glycoprotein. Either involved in preparing the third sugar for attachment of the fourth pentasaccharide subunit or processing the fourth sugar prior to its addition to the lipid-linked trisaccharide. In Haloferax volcanii (strain ATCC 29605 / DSM 3757 / JCM 8879 / NBRC 14742 / NCIMB 2012 / VKM B-1768 / DS2) (Halobacterium volcanii), this protein is Archaeal glycosylation protein Q (aglQ).